A 72-amino-acid polypeptide reads, in one-letter code: BBSome-interacting protein 1 (72 aa).

Belongs to the BBIP10 family.

It localises to the cell projection. It is found in the cilium. The protein resides in the cytoplasm. Functionally, required for primary cilia assembly. This Danio rerio (Zebrafish) protein is BBSome-interacting protein 1 (bbip1).